The primary structure comprises 91 residues: DNA-directed RNA polymerase subunit omega (91 aa).

Belongs to the RNA polymerase subunit omega family. The RNAP catalytic core consists of 2 alpha, 1 beta, 1 beta' and 1 omega subunit. When a sigma factor is associated with the core the holoenzyme is formed, which can initiate transcription.

The enzyme catalyses RNA(n) + a ribonucleoside 5'-triphosphate = RNA(n+1) + diphosphate. Its function is as follows. Promotes RNA polymerase assembly. Latches the N- and C-terminal regions of the beta' subunit thereby facilitating its interaction with the beta and alpha subunits. The polypeptide is DNA-directed RNA polymerase subunit omega (Enterobacter sp. (strain 638)).